The primary structure comprises 197 residues: MEVILLERVAKLGQMGEIVKVKDGFARNFLLKRKKALRATAENKAKYEGMKAELEANNIKAKGEAAKVAEKIDGRDIVIIRQASESGQLFGSVSVRDIVVALAADGITVSRPQVWLDAPIKAIGQQKITIAIHPEVETSVTVTVARSADEAERIKRGEDISTRQEDRDAAAEAIAAAGEFFDPEAQEDEAAAGETAQ.

The disordered stretch occupies residues 178–197; the sequence is GEFFDPEAQEDEAAAGETAQ. A compositionally biased stretch (acidic residues) spans 181-191; sequence FDPEAQEDEAA.

The protein belongs to the bacterial ribosomal protein bL9 family.

Binds to the 23S rRNA. In Bradyrhizobium sp. (strain BTAi1 / ATCC BAA-1182), this protein is Large ribosomal subunit protein bL9.